A 356-amino-acid chain; its full sequence is MRRQLRSRRAPAFPYGYRYRLDDQDEMNHNYLADEEEEAEEEAQVMMVPGLEEEEEEEEGKEEEEEREEEEGQGQSTGNAWWRKLQIVNEYLWDPEKRMSLARTGQSRSLILVIYFFFYASLAAVITLFIYMLFLAISPYMPTFTEQVKPPGVMIRPFAHSLNFNFNVSEPETWQRYVISLNGFLQGYNDSLQEEMNIDCPPGQYFIQDGDEDEDKKACQFKRSFLKNCSGLEDPTFGYSTGQPCILLKMNRIVGFRPEFGDPVKVSCKVQKGDENDIRSINYYPESASFDLRYYPYYGKLTHVNYTSPLVAMHFTDVVKNQEVPVQCQLKGKGIVNDVINDRFVGRIIFTLNIET.

Topologically, residues 1 to 109 (MRRQLRSRRA…SLARTGQSRS (109 aa)) are nuclear. Positions 32–77 (LADEEEEAEEEAQVMMVPGLEEEEEEEEGKEEEEEREEEEGQGQST) are disordered. Acidic residues-rich tracts occupy residues 33–43 (ADEEEEAEEEA) and 51–72 (LEEE…EEEG). Residues 110 to 130 (LILVIYFFFYASLAAVITLFI) form a helical; Signal-anchor for type II membrane protein membrane-spanning segment. Topologically, residues 131–356 (YMLFLAISPY…RIIFTLNIET (226 aa)) are perinuclear space.

Belongs to the X(+)/potassium ATPases subunit beta family. As to quaternary structure, does not associate with known Na,K-ATPase alpha-subunits. Associates with a SMAD7-transcriptional complex. Interacts with SNW1 and TOR1AIP1. In terms of tissue distribution, expressed in perinatal myocytes (at protein level). Expressed during postnatal development in skeletal muscle and heart.

Its subcellular location is the nucleus inner membrane. Its function is as follows. May act as a transcriptional coregulator during muscle development through its interaction with SNW1. Has lost its ancestral function as a Na,K-ATPase beta-subunit. This Rattus norvegicus (Rat) protein is Protein ATP1B4 (Atp1b4).